We begin with the raw amino-acid sequence, 71 residues long: uncharacterized protein (71 aa).

This is an uncharacterized protein from Enterobacteria phage T4 (Bacteriophage T4).